Here is a 186-residue protein sequence, read N- to C-terminus: ATP synthase subunit delta (186 aa).

The protein belongs to the ATPase delta chain family. As to quaternary structure, F-type ATPases have 2 components, F(1) - the catalytic core - and F(0) - the membrane proton channel. F(1) has five subunits: alpha(3), beta(3), gamma(1), delta(1), epsilon(1). F(0) has three main subunits: a(1), b(2) and c(10-14). The alpha and beta chains form an alternating ring which encloses part of the gamma chain. F(1) is attached to F(0) by a central stalk formed by the gamma and epsilon chains, while a peripheral stalk is formed by the delta and b chains.

It localises to the cell inner membrane. In terms of biological role, f(1)F(0) ATP synthase produces ATP from ADP in the presence of a proton or sodium gradient. F-type ATPases consist of two structural domains, F(1) containing the extramembraneous catalytic core and F(0) containing the membrane proton channel, linked together by a central stalk and a peripheral stalk. During catalysis, ATP synthesis in the catalytic domain of F(1) is coupled via a rotary mechanism of the central stalk subunits to proton translocation. This protein is part of the stalk that links CF(0) to CF(1). It either transmits conformational changes from CF(0) to CF(1) or is implicated in proton conduction. The protein is ATP synthase subunit delta of Brucella melitensis biotype 2 (strain ATCC 23457).